The sequence spans 186 residues: CRS2-like protein, chloroplastic (186 aa).

The transit peptide at 1–49 directs the protein to the chloroplast; the sequence is MAMTAASVFGSGGCLELLTSSKAMRGKLWTRLAPFISKRHASTSQTSLS. Residue tyrosine 73 coordinates tRNA. The Proton acceptor role is filled by histidine 78. 3 residues coordinate tRNA: tyrosine 123, asparagine 125, and asparagine 171.

This sequence belongs to the PTH family.

It localises to the plastid. It is found in the chloroplast. The sequence is that of CRS2-like protein, chloroplastic from Oryza sativa subsp. japonica (Rice).